The primary structure comprises 481 residues: Autolysin (481 aa).

A Peptidase C51 domain is found at 7-142; it reads KNEFIERLKT…LQDDNMLMIS (136 aa). The N-acetylmuramoyl-L-alanine amidase domain maps to 198-323; that stretch reads SNPKGIVIHN…NEFTSTSCPH (126 aa). Residues 398–466 enclose the SH3b domain; sequence EESARFTNGN…YLPIRTWNGS (69 aa).

It belongs to the N-acetylmuramoyl-L-alanine amidase 2 family.

Its subcellular location is the secreted. The catalysed reaction is Hydrolyzes the link between N-acetylmuramoyl residues and L-amino acid residues in certain cell-wall glycopeptides.. Autolysins are involved in some important biological processes such as cell separation, cell-wall turnover, competence for genetic transformation, formation of the flagella and sporulation. Autolysin strictly depends on the presence of choline-containing cell walls for activity. This chain is Autolysin (lytA), found in Staphylococcus aureus.